The following is a 197-amino-acid chain: RNA polymerase II subunit A C-terminal domain phosphatase ssup-72 (197 aa).

Ser39 carries the phosphoserine modification.

This sequence belongs to the SSU72 phosphatase family. As to quaternary structure, may interact with synd-1 (via C-terminus); the interaction may prevent ssup-72 binding to RNA polymerase II ama-1. May interact with RNA polymerase II ama-1. Post-translationally, may be phosphorylated by kin-20. Expressed in epidermis, intestine and nervous system.

The protein localises to the nucleus. It carries out the reaction O-phospho-L-seryl-[protein] + H2O = L-seryl-[protein] + phosphate. The catalysed reaction is O-phospho-L-threonyl-[protein] + H2O = L-threonyl-[protein] + phosphate. Functionally, protein phosphatase that dephosphorylates 'Ser-5' of the heptad repeats YSPTSPS in the C-terminal domain of the large RNA polymerase II subunit ama-1. By regulating the phosphorylation status of ama-1 and thus ama-1 binding to specific polyadenylation sites, regulates alternative polyadenylation of pre-mRNAs, including unc-44 and dlk-1 mRNAs. This results in the tissue-specific expression of unc-44 isoforms. The chain is RNA polymerase II subunit A C-terminal domain phosphatase ssup-72 from Caenorhabditis elegans.